Reading from the N-terminus, the 306-residue chain is Aspartate carbamoyltransferase catalytic subunit (306 aa).

2 residues coordinate carbamoyl phosphate: arginine 54 and threonine 55. An L-aspartate-binding site is contributed by lysine 83. Residues arginine 104, histidine 132, and glutamine 135 each coordinate carbamoyl phosphate. The L-aspartate site is built by arginine 165 and arginine 227. Positions 266 and 267 each coordinate carbamoyl phosphate.

Belongs to the aspartate/ornithine carbamoyltransferase superfamily. ATCase family. Heterododecamer (2C3:3R2) of six catalytic PyrB chains organized as two trimers (C3), and six regulatory PyrI chains organized as three dimers (R2).

It carries out the reaction carbamoyl phosphate + L-aspartate = N-carbamoyl-L-aspartate + phosphate + H(+). The protein operates within pyrimidine metabolism; UMP biosynthesis via de novo pathway; (S)-dihydroorotate from bicarbonate: step 2/3. In terms of biological role, catalyzes the condensation of carbamoyl phosphate and aspartate to form carbamoyl aspartate and inorganic phosphate, the committed step in the de novo pyrimidine nucleotide biosynthesis pathway. This is Aspartate carbamoyltransferase catalytic subunit from Clostridium novyi (strain NT).